The chain runs to 370 residues: MTLTEKKKVVVGMSGGVDSSMAAALLKEEGYEVIGITLQTMPSGGPDDVGGCCSITAIDDARRVAHQLGIPHYVLNFRTIFDENVIDYFTNAYLSGETPNPCTMCNRVVRWGEFLRKARALGADYLATGHYAKVLQDPQSGRCFLSRPTDTWKDQTYMLYNLTQDQLKHTLFPLADYKKEHIREMAAERGLLRVSRKPDSQEICFIPDDDYVSFIRERSPEKIKPGNFVDRQGNILGRHQGLINYTVGQRKGLGVTFGKPMFVLGFNVEGNEVILGEDQEVYAHTLLATDLNWIAIPGVEGPLTVQAKIRYKAPLAEAKIIPLKDSETLPGAIGPVVRVEFTTPQRAITPGQAVVFYQGELVVGGGKIIT.

Residues 12–19 (GMSGGVDS) and Leu38 each bind ATP. Cys105 serves as the catalytic Nucleophile. A disulfide bridge links Cys105 with Cys204. Gly129 serves as a coordination point for ATP. Residues 153–155 (KDQ) form an interaction with tRNA region. The active-site Cysteine persulfide intermediate is Cys204. Residues 310-311 (RY) are interaction with tRNA.

This sequence belongs to the MnmA/TRMU family.

The protein resides in the cytoplasm. The catalysed reaction is S-sulfanyl-L-cysteinyl-[protein] + uridine(34) in tRNA + AH2 + ATP = 2-thiouridine(34) in tRNA + L-cysteinyl-[protein] + A + AMP + diphosphate + H(+). Functionally, catalyzes the 2-thiolation of uridine at the wobble position (U34) of tRNA, leading to the formation of s(2)U34. This chain is tRNA-specific 2-thiouridylase MnmA, found in Desulfitobacterium hafniense (strain Y51).